The primary structure comprises 262 residues: MQTPVNSFKAALREGPVQLGFWLALAHPDIAEICAGQGYDWLLIDGEHGPQTLPGIVAQLRAVEATPPCSAIVRVPGHDSVTIKQVLDLGAQTLMVPMVETAEQAKAIVTASRYPPAGERGLGGARASRWGGYPAYVAEANAQVCIIAQIETATAVDNIEAIAAVDGIDALFLGPADLAATEGLLGASSFDALFKLTGEALARIVATGKPAGILSRDERLVQQFLDGGARFIANGIDSFTFAKGAGDGLRRWRERIAAQGGV.

Residue H48 is the Proton acceptor of the active site. Q149 contacts substrate. Position 151 (E151) interacts with Mg(2+). Positions 176 and 177 each coordinate substrate. A Mg(2+)-binding site is contributed by D177.

Belongs to the HpcH/HpaI aldolase family.

It catalyses the reaction (S)-4-hydroxy-2-oxopentanoate = acetaldehyde + pyruvate. Its pathway is xenobiotic degradation; biphenyl degradation. Its function is as follows. Catalyzes the reversible retro-aldol cleavage of 4-hydroxy-2-oxovalerate to pyruvate and acetaldehyde. In Novosphingobium aromaticivorans (Sphingomonas aromaticivorans), this protein is 4-hydroxy-2-oxovalerate aldolase (bphF).